We begin with the raw amino-acid sequence, 541 residues long: Tyrosine-protein kinase Yes (541 aa).

Residues 1-20 show a composition bias toward basic and acidic residues; the sequence is MGCIKSKEDKGPAMKYRTDN. The disordered stretch occupies residues 1–43; it reads MGCIKSKEDKGPAMKYRTDNTPEPISSHVSHYGSDSSQATQSP. Gly2 carries N-myristoyl glycine lipidation. Residue Cys3 is the site of S-palmitoyl cysteine; in membrane form attachment. The span at 26-37 shows a compositional bias: low complexity; the sequence is SSHVSHYGSDSS. Positions 89–150 constitute an SH3 domain; it reads GGVTVFVALY…PSNYVAPADS (62 aa). Positions 156–253 constitute an SH2 domain; it reads WYFGKMGRKD…GLCHKLTTVC (98 aa). One can recognise a Protein kinase domain in the interval 275-528; it reads LRLEVKLGQG…YIQSFLEDYF (254 aa). ATP-binding positions include 281-289 and Lys303; that span reads LGQGCFGEV. The Proton acceptor role is filled by Asp394. Position 424 is a phosphotyrosine; by autocatalysis (Tyr424). The residue at position 535 (Tyr535) is a Phosphotyrosine; by CSK.

This sequence belongs to the protein kinase superfamily. Tyr protein kinase family. SRC subfamily. Post-translationally, autophosphorylation at Tyr-424 maintains enzyme activity. Palmitoylation at Cys-3 promotes membrane localization.

It localises to the cell membrane. The protein localises to the cytoplasm. The protein resides in the cytoskeleton. Its subcellular location is the microtubule organizing center. It is found in the centrosome. It localises to the cytosol. The protein localises to the cell junction. The enzyme catalyses L-tyrosyl-[protein] + ATP = O-phospho-L-tyrosyl-[protein] + ADP + H(+). Its function is as follows. Non-receptor protein tyrosine kinase that is involved in the regulation of cell growth and survival, apoptosis, cell-cell adhesion, cytoskeleton remodeling, differentiation, G2/M progression and cytokinesis. The protein is Tyrosine-protein kinase Yes (YES1) of Gallus gallus (Chicken).